The following is a 300-amino-acid chain: 4-diphosphocytidyl-2-C-methyl-D-erythritol kinase (300 aa).

Lys-22 is an active-site residue. 105-115 is an ATP binding site; it reads PMGGGLGGGSS. The active site involves Asp-147.

This sequence belongs to the GHMP kinase family. IspE subfamily.

The catalysed reaction is 4-CDP-2-C-methyl-D-erythritol + ATP = 4-CDP-2-C-methyl-D-erythritol 2-phosphate + ADP + H(+). Its pathway is isoprenoid biosynthesis; isopentenyl diphosphate biosynthesis via DXP pathway; isopentenyl diphosphate from 1-deoxy-D-xylulose 5-phosphate: step 3/6. Catalyzes the phosphorylation of the position 2 hydroxy group of 4-diphosphocytidyl-2C-methyl-D-erythritol. In Colwellia psychrerythraea (strain 34H / ATCC BAA-681) (Vibrio psychroerythus), this protein is 4-diphosphocytidyl-2-C-methyl-D-erythritol kinase.